Consider the following 333-residue polypeptide: NADH dehydrogenase (ubiquinone) complex I, assembly factor 6 (333 aa).

A mitochondrion-targeting transit peptide spans 1–44 (MAASTLGSAWGPLRLGVPGLCRRRPPRGLWARARRLSEPVASGR).

This sequence belongs to the NDUFAF6 family.

The protein localises to the mitochondrion inner membrane. In terms of biological role, involved in the assembly of mitochondrial NADH:ubiquinone oxidoreductase complex (complex I) at early stages. May play a role in the biogenesis of complex I subunit MT-ND1. The chain is NADH dehydrogenase (ubiquinone) complex I, assembly factor 6 (NDUFAF6) from Bos taurus (Bovine).